The primary structure comprises 427 residues: Branched-chain-amino-acid aminotransferase, mitochondrial (427 aa).

A mitochondrion-targeting transit peptide spans 1 to 47; that stretch reads MSLMFLRRAGNIKGRNIRFALQRGSVGYSQQSSEACKNFLNTTQLRT. K256 bears the N6-(pyridoxal phosphate)lysine mark.

This sequence belongs to the class-IV pyridoxal-phosphate-dependent aminotransferase family. The cofactor is pyridoxal 5'-phosphate.

The protein localises to the mitochondrion. It localises to the nucleus. The protein resides in the cytoplasm. The catalysed reaction is L-leucine + 2-oxoglutarate = 4-methyl-2-oxopentanoate + L-glutamate. The enzyme catalyses L-isoleucine + 2-oxoglutarate = (S)-3-methyl-2-oxopentanoate + L-glutamate. It carries out the reaction L-valine + 2-oxoglutarate = 3-methyl-2-oxobutanoate + L-glutamate. In terms of biological role, catalyzes the first reaction in the catabolism of the essential branched chain amino acids leucine, isoleucine, and valine. The protein is Branched-chain-amino-acid aminotransferase, mitochondrial (eca39) of Schizosaccharomyces pombe (strain 972 / ATCC 24843) (Fission yeast).